The primary structure comprises 143 residues: Sperm mitochondrial-associated cysteine-rich protein (143 aa).

A phosphoserine mark is found at S37, S44, and S110. The tract at residues 101–143 is disordered; the sequence is CCSSENKTESDSDTSGQTLEKGSQSPQSPPGAQGNWNQKKSNK. Residues 113–126 show a composition bias toward polar residues; the sequence is DTSGQTLEKGSQSP. Residue S128 is modified to Phosphoserine. Residues 134–143 are compositionally biased toward polar residues; it reads GNWNQKKSNK.

As to expression, testis. Is selectively expressed in the spermatids of seminiferous tubules.

Its subcellular location is the cytoplasm. The protein localises to the mitochondrion membrane. Involved in sperm motility. Its absence is associated with genetic background dependent male infertility. Infertility may be due to reduced sperm motility in the female reproductive tract and inability to penetrate the oocyte zona pellucida. The polypeptide is Sperm mitochondrial-associated cysteine-rich protein (Smcp) (Mus musculus (Mouse)).